Consider the following 349-residue polypeptide: Aspartate carbamoyltransferase catalytic subunit (349 aa).

The carbamoyl phosphate site is built by R59 and T60. K87 contacts L-aspartate. The carbamoyl phosphate site is built by R109, H142, and Q145. L-aspartate-binding residues include R182 and R253. Residues G294 and P295 each contribute to the carbamoyl phosphate site.

Belongs to the aspartate/ornithine carbamoyltransferase superfamily. ATCase family. In terms of assembly, heterododecamer (2C3:3R2) of six catalytic PyrB chains organized as two trimers (C3), and six regulatory PyrI chains organized as three dimers (R2).

The catalysed reaction is carbamoyl phosphate + L-aspartate = N-carbamoyl-L-aspartate + phosphate + H(+). Its pathway is pyrimidine metabolism; UMP biosynthesis via de novo pathway; (S)-dihydroorotate from bicarbonate: step 2/3. Its function is as follows. Catalyzes the condensation of carbamoyl phosphate and aspartate to form carbamoyl aspartate and inorganic phosphate, the committed step in the de novo pyrimidine nucleotide biosynthesis pathway. The sequence is that of Aspartate carbamoyltransferase catalytic subunit from Synechococcus sp. (strain CC9605).